Reading from the N-terminus, the 170-residue chain is CDP-archaeol synthase (170 aa).

Helical transmembrane passes span 6–26, 53–73, 83–103, 114–134, and 140–160; these read LLWA…PVLV, GLIG…FITP, LLLA…GSFF, PAIG…AYPV, and GQII…NYFA.

The protein belongs to the CDP-archaeol synthase family. Mg(2+) serves as cofactor.

It localises to the cell membrane. The enzyme catalyses 2,3-bis-O-(geranylgeranyl)-sn-glycerol 1-phosphate + CTP + H(+) = CDP-2,3-bis-O-(geranylgeranyl)-sn-glycerol + diphosphate. The protein operates within membrane lipid metabolism; glycerophospholipid metabolism. In terms of biological role, catalyzes the formation of CDP-2,3-bis-(O-geranylgeranyl)-sn-glycerol (CDP-archaeol) from 2,3-bis-(O-geranylgeranyl)-sn-glycerol 1-phosphate (DGGGP) and CTP. This reaction is the third ether-bond-formation step in the biosynthesis of archaeal membrane lipids. The chain is CDP-archaeol synthase from Thermococcus onnurineus (strain NA1).